Here is a 629-residue protein sequence, read N- to C-terminus: Kelch-like protein 8 (629 aa).

A compositionally biased stretch (polar residues) spans Met1–Gln10. Residues Met1–Ser40 are disordered. Ala2 is modified (N-acetylalanine). The span at Ala11–Gln23 shows a compositional bias: basic residues. Residues His24–Gln35 show a composition bias toward low complexity. Residues Cys76–Val143 enclose the BTB domain. In terms of domain architecture, BACK spans Cys178–Val279. Kelch repeat units lie at residues Val328 to Gly375, Lys376 to Gly422, Ile424 to Asn469, Val471 to Gly516, Cys517 to Gly563, and Ile565 to Cys610.

Component of the BCR(KLHL8) E3 ubiquitin ligase complex, at least composed of CUL3, KLHL8 and RBX1. Interacts with RAPSN.

Its pathway is protein modification; protein ubiquitination. Its function is as follows. Substrate-specific adapter of a BCR (BTB-CUL3-RBX1) E3 ubiquitin ligase complex required for The BCR(KLHL8) ubiquitin ligase complex mediates ubiquitination and degradation of RAPSN. This is Kelch-like protein 8 (Klhl8) from Mus musculus (Mouse).